The chain runs to 470 residues: Uronate isomerase (470 aa).

The protein belongs to the metallo-dependent hydrolases superfamily. Uronate isomerase family.

It carries out the reaction D-glucuronate = D-fructuronate. It catalyses the reaction aldehydo-D-galacturonate = keto-D-tagaturonate. Its pathway is carbohydrate metabolism; pentose and glucuronate interconversion. The protein is Uronate isomerase of Vibrio parahaemolyticus serotype O3:K6 (strain RIMD 2210633).